Reading from the N-terminus, the 347-residue chain is DNA primase small subunit PriS (347 aa).

Active-site residues include Asp95 and Asp97. The Zn(2+) site is built by Cys106, His108, Cys114, and Cys117. The Zinc knuckle motif motif lies at 106–117 (CNHEPGTVCPIC). Asp280 is an active-site residue.

Belongs to the eukaryotic-type primase small subunit family. As to quaternary structure, heterodimer of a small subunit (PriS) and a large subunit (PriL). Both participate in formation of the active center, but the ATP-binding site is exclusively located on the small subunit. Mg(2+) serves as cofactor. Requires Mn(2+) as cofactor.

Functionally, catalytic subunit of DNA primase, an RNA polymerase that catalyzes the synthesis of short RNA molecules used as primers for DNA polymerase during DNA replication. The small subunit contains the primase catalytic core and has DNA synthesis activity on its own. Binding to the large subunit stabilizes and modulates the activity, increasing the rate of DNA synthesis while decreasing the length of the DNA fragments, and conferring RNA synthesis capability. The DNA polymerase activity may enable DNA primase to also catalyze primer extension after primer synthesis. May also play a role in DNA repair. The protein is DNA primase small subunit PriS of Pyrococcus furiosus (strain ATCC 43587 / DSM 3638 / JCM 8422 / Vc1).